A 209-amino-acid polypeptide reads, in one-letter code: Uracil phosphoribosyltransferase (209 aa).

5-phospho-alpha-D-ribose 1-diphosphate contacts are provided by residues Arg79, Arg104, and 131–139 (DPMLATGNS). Uracil contacts are provided by residues Ile194 and 199-201 (GDA). Asp200 contributes to the 5-phospho-alpha-D-ribose 1-diphosphate binding site.

It belongs to the UPRTase family. The cofactor is Mg(2+).

It catalyses the reaction UMP + diphosphate = 5-phospho-alpha-D-ribose 1-diphosphate + uracil. It participates in pyrimidine metabolism; UMP biosynthesis via salvage pathway; UMP from uracil: step 1/1. Allosterically activated by GTP. In terms of biological role, catalyzes the conversion of uracil and 5-phospho-alpha-D-ribose 1-diphosphate (PRPP) to UMP and diphosphate. This Rhodococcus jostii (strain RHA1) protein is Uracil phosphoribosyltransferase.